A 381-amino-acid polypeptide reads, in one-letter code: E3 ubiquitin-protein ligase RNF34 (381 aa).

The segment at 56-107 (EGPNIVCKACGLSFSVFRKKHVCCDCKKDFCSLCSVSQENLRRCSTCHLLQE) adopts an FYVE-type zinc-finger fold. The region spanning 115 to 134 (LMRLKVKDLRQYLLLRNVPT) is the SAP 1 domain. Phosphoserine is present on S169. Residues 216–261 (LASANTDDEDGEEDDDDDDDDDDEDDDEQEENLEEQNPGLSKKKAR) are disordered. The span at 221–249 (TDDEDGEEDDDDDDDDDDEDDDEQEENLE) shows a compositional bias: acidic residues. Phosphoserine occurs at positions 263 and 265. Positions 273-287 (VEGMSVRQLKEILAR) constitute an SAP 2 domain. An RING-type zinc finger spans residues 334–369 (CRICMDAVIDCVLLECGHMVTCTKCGKRMSECPICR).

As to quaternary structure, interacts with CASP8 and CASP10. Interacts with p53/TP53; involved in p53/TP53 ubiquitination. Interacts (via RING-type zinc finger) with MDM2; the interaction stabilizes MDM2. Interacts (via RING-type zinc finger) with PPARGC1A. Interacts with NOD1. Post-translationally, proteolytically cleaved by caspases upon induction of apoptosis by TNF. In terms of processing, autoubiquitinated (in vitro). Ubiquitous. Detected in brain, cerebellum, midbrain, hippocampus, striatum, heart, lung, kidney, muscle, spleen and testis.

It is found in the cell membrane. The protein resides in the endomembrane system. Its subcellular location is the nucleus. The protein localises to the nucleus speckle. It localises to the cytoplasm. It is found in the cytosol. The enzyme catalyses S-ubiquitinyl-[E2 ubiquitin-conjugating enzyme]-L-cysteine + [acceptor protein]-L-lysine = [E2 ubiquitin-conjugating enzyme]-L-cysteine + N(6)-ubiquitinyl-[acceptor protein]-L-lysine.. Its pathway is protein modification; protein ubiquitination. Its function is as follows. E3 ubiquitin-protein ligase that regulates several biological processes through the ubiquitin-mediated proteasomal degradation of various target proteins. Ubiquitinates the caspases CASP8 and CASP10, promoting their proteasomal degradation, to negatively regulate cell death downstream of death domain receptors in the extrinsic pathway of apoptosis. May mediate 'Lys-48'-linked polyubiquitination of RIPK1 and its subsequent proteasomal degradation thereby indirectly regulating the tumor necrosis factor-mediated signaling pathway. Negatively regulates p53/TP53 through its direct ubiquitination and targeting to proteasomal degradation. Indirectly, may also negatively regulate p53/TP53 through ubiquitination and degradation of SFN. Mediates PPARGC1A proteasomal degradation probably through ubiquitination thereby indirectly regulating the metabolism of brown fat cells. Possibly involved in innate immunity, through 'Lys-48'-linked polyubiquitination of NOD1 and its subsequent proteasomal degradation. The protein is E3 ubiquitin-protein ligase RNF34 of Rattus norvegicus (Rat).